The primary structure comprises 257 residues: 1-(5-phosphoribosyl)-5-[(5-phosphoribosylamino)methylideneamino] imidazole-4-carboxamide isomerase (257 aa).

The protein belongs to the HisA/HisF family.

Its subcellular location is the cytoplasm. It catalyses the reaction 1-(5-phospho-beta-D-ribosyl)-5-[(5-phospho-beta-D-ribosylamino)methylideneamino]imidazole-4-carboxamide = 5-[(5-phospho-1-deoxy-D-ribulos-1-ylimino)methylamino]-1-(5-phospho-beta-D-ribosyl)imidazole-4-carboxamide. The protein operates within amino-acid biosynthesis; L-histidine biosynthesis; L-histidine from 5-phospho-alpha-D-ribose 1-diphosphate: step 4/9. The protein is 1-(5-phosphoribosyl)-5-[(5-phosphoribosylamino)methylideneamino] imidazole-4-carboxamide isomerase (his-7) of Neurospora crassa (strain ATCC 24698 / 74-OR23-1A / CBS 708.71 / DSM 1257 / FGSC 987).